A 271-amino-acid polypeptide reads, in one-letter code: ATP synthase subunit a (271 aa).

Helical transmembrane passes span 40–60, 100–120, 146–166, 220–240, and 242–262; these read TINI…LVLF, LIAP…LMDL, DVNV…FYNI, LIFI…LNVP, and AIFH…LTIV.

It belongs to the ATPase A chain family. In terms of assembly, F-type ATPases have 2 components, CF(1) - the catalytic core - and CF(0) - the membrane proton channel. CF(1) has five subunits: alpha(3), beta(3), gamma(1), delta(1), epsilon(1). CF(0) has three main subunits: a(1), b(2) and c(9-12). The alpha and beta chains form an alternating ring which encloses part of the gamma chain. CF(1) is attached to CF(0) by a central stalk formed by the gamma and epsilon chains, while a peripheral stalk is formed by the delta and b chains.

It is found in the cell inner membrane. In terms of biological role, key component of the proton channel; it plays a direct role in the translocation of protons across the membrane. The chain is ATP synthase subunit a from Shigella flexneri.